A 586-amino-acid polypeptide reads, in one-letter code: Eukaryotic translation initiation factor 3 subunit D (586 aa).

The interval 107–154 is disordered; it reads FGRGGGTVFRGRAQRGGAGQRGGRAGFQRVGAGRGQGGDRYYDNRGAR. Over residues 108-131 the composition is skewed to gly residues; the sequence is GRGGGTVFRGRAQRGGAGQRGGRA. Residues 301 to 315 are RNA gate; the sequence is SLDLVTVNENAADAP. The span at 566–577 shows a compositional bias: acidic residues; sequence FEEDDEAAEEEQ. Residues 566 to 586 form a disordered region; sequence FEEDDEAAEEEQEAKGEVEEA.

The protein belongs to the eIF-3 subunit D family. Component of the eukaryotic translation initiation factor 3 (eIF-3) complex.

It is found in the cytoplasm. MRNA cap-binding component of the eukaryotic translation initiation factor 3 (eIF-3) complex, which is involved in protein synthesis of a specialized repertoire of mRNAs and, together with other initiation factors, stimulates binding of mRNA and methionyl-tRNAi to the 40S ribosome. The eIF-3 complex specifically targets and initiates translation of a subset of mRNAs involved in cell proliferation. In the eIF-3 complex, eif3d specifically recognizes and binds the 7-methylguanosine cap of a subset of mRNAs. This Emericella nidulans (strain FGSC A4 / ATCC 38163 / CBS 112.46 / NRRL 194 / M139) (Aspergillus nidulans) protein is Eukaryotic translation initiation factor 3 subunit D.